Here is a 34-residue protein sequence, read N- to C-terminus: Photosystem II reaction center protein Psb30 (34 aa).

The chain crosses the membrane as a helical span at residues 6–26; sequence VIGQLTSLAMIVLVGPAVIVV.

Belongs to the Psb30/Ycf12 family. As to quaternary structure, PSII is composed of 1 copy each of membrane proteins PsbA, PsbB, PsbC, PsbD, PsbE, PsbF, PsbH, PsbI, PsbJ, PsbK, PsbL, PsbM, PsbT, PsbX, PsbY, PsbZ, Psb30/Ycf12, peripheral proteins of the oxygen-evolving complex and a large number of cofactors. It forms dimeric complexes.

The protein resides in the plastid. Its subcellular location is the chloroplast thylakoid membrane. Its function is as follows. A core subunit of photosystem II (PSII), probably helps stabilize the reaction center. In Gracilaria tenuistipitata var. liui (Red alga), this protein is Photosystem II reaction center protein Psb30.